The following is a 387-amino-acid chain: Oxidase FUB9 (387 aa).

The tract at residues 1 to 20 (MSRTNLPIQPAKMSDATSSK) is disordered. Positions 18-379 (SSKPQIFSIQ…TPAHLSILNA (362 aa)) constitute an FMN hydroxy acid dehydrogenase domain. Y44 lines the a 2-oxocarboxylate pocket. FMN is bound by residues S126, Q150, and T178. R187 serves as a coordination point for a 2-oxocarboxylate. An FMN-binding site is contributed by K250. H274 acts as the Proton acceptor in catalysis. Residue R277 coordinates a 2-oxocarboxylate. Residues 305 to 309 (DGGFR) and 328 to 329 (GR) contribute to the FMN site.

It belongs to the FMN-dependent alpha-hydroxy acid dehydrogenase family. Requires FMN as cofactor.

It functions in the pathway mycotoxin biosynthesis. In terms of biological role, oxidase; part of the gene cluster that mediates the biosynthesis of fusaric acid, a mycotoxin with low to moderate toxicity to animals and humans, but with high phytotoxic properties. L-aspartate is suggested as fusaric acid amino acid precursor that is activated and further processed to O-acetyl-L-homoserine by cluster enzymes aspartate kinase FUB3 and homoserine O-acetyltransferase FUB5, as well as enzymes of the primary metabolism. The polyketide synthase (PKS) FUB1 generates the triketide trans-2-hexenal which is presumptively released by the hydrolase FUB4 and linked to the NRPS-bound amino acid precursor by NAD(P)-dependent dehydrogenase FUB6. FUB1, FUB4, and the non-canonical NRPS Fub8 may form an enzyme complex. Further processing of the NRPS-bound intermediate might be carried out by FUB6 and the sulfhydrylase FUB7, enabling a spontaneous electrocyclization to close the carbon backbone of fusaric acid. Dihydrofusaric acid is likely to be released via reduction by the thioester reductase (TR) domain of FUB8 whereupon the final oxidation to fusaric acid may (also) be performed by the FMN-dependent dehydrogenase FUB9. The polypeptide is Oxidase FUB9 (Fusarium oxysporum f. sp. lycopersici (strain 4287 / CBS 123668 / FGSC 9935 / NRRL 34936) (Fusarium vascular wilt of tomato)).